A 93-amino-acid polypeptide reads, in one-letter code: Small ribosomal subunit protein uS19 (93 aa).

Belongs to the universal ribosomal protein uS19 family.

Protein S19 forms a complex with S13 that binds strongly to the 16S ribosomal RNA. In Desulfitobacterium hafniense (strain DSM 10664 / DCB-2), this protein is Small ribosomal subunit protein uS19.